We begin with the raw amino-acid sequence, 417 residues long: Lipoyl synthase, mitochondrial (417 aa).

The N-terminal 30 residues, 1 to 30 (MATSIPRSRCFLTSSTLKVVPRSRTPLRSF), are a transit peptide targeting the mitochondrion. The interval 23 to 62 (SRTPLRSFATTSDTPQTSVPEAPGKRSRPPTSFSDTLNAG) is disordered. 2 stretches are compositionally biased toward polar residues: residues 30 to 41 (FATTSDTPQTSV) and 51 to 61 (PPTSFSDTLNA). [4Fe-4S] cluster is bound by residues Cys-132, Cys-137, Cys-143, Cys-163, Cys-167, Cys-170, and Ser-378. The Radical SAM core domain maps to 146–367 (GSSKSAATAT…RQRALDMGFL (222 aa)).

The protein belongs to the radical SAM superfamily. Lipoyl synthase family. The cofactor is [4Fe-4S] cluster.

It localises to the mitochondrion. It catalyses the reaction [[Fe-S] cluster scaffold protein carrying a second [4Fe-4S](2+) cluster] + N(6)-octanoyl-L-lysyl-[protein] + 2 oxidized [2Fe-2S]-[ferredoxin] + 2 S-adenosyl-L-methionine + 4 H(+) = [[Fe-S] cluster scaffold protein] + N(6)-[(R)-dihydrolipoyl]-L-lysyl-[protein] + 4 Fe(3+) + 2 hydrogen sulfide + 2 5'-deoxyadenosine + 2 L-methionine + 2 reduced [2Fe-2S]-[ferredoxin]. Its pathway is protein modification; protein lipoylation via endogenous pathway; protein N(6)-(lipoyl)lysine from octanoyl-[acyl-carrier-protein]: step 2/2. Catalyzes the radical-mediated insertion of two sulfur atoms into the C-6 and C-8 positions of the octanoyl moiety bound to the lipoyl domains of lipoate-dependent enzymes, thereby converting the octanoylated domains into lipoylated derivatives. The protein is Lipoyl synthase, mitochondrial of Pyrenophora tritici-repentis (strain Pt-1C-BFP) (Wheat tan spot fungus).